Consider the following 222-residue polypeptide: Large ribosomal subunit protein uL4 (222 aa).

Positions 67–87 (QKGTGNARAGSKRTNVRRGGG) are disordered.

This sequence belongs to the universal ribosomal protein uL4 family. As to quaternary structure, part of the 50S ribosomal subunit.

One of the primary rRNA binding proteins, this protein initially binds near the 5'-end of the 23S rRNA. It is important during the early stages of 50S assembly. It makes multiple contacts with different domains of the 23S rRNA in the assembled 50S subunit and ribosome. Its function is as follows. Forms part of the polypeptide exit tunnel. The protein is Large ribosomal subunit protein uL4 of Rhodopirellula baltica (strain DSM 10527 / NCIMB 13988 / SH1).